The sequence spans 208 residues: Riboflavin synthase (208 aa).

Lumazine-binding repeat units follow at residues 1–97 (MFTG…MGGH) and 98–195 (IISG…VDTT). 2,4-dihydroxypteridine is bound by residues 4 to 6 (GIV), 48 to 50 (CLT), 62 to 67 (DIMKIT), 101 to 103 (GHI), Lys137, 146 to 148 (SLT), and 160 to 165 (SIIPET).

As to quaternary structure, homotrimer.

The catalysed reaction is 2 6,7-dimethyl-8-(1-D-ribityl)lumazine + H(+) = 5-amino-6-(D-ribitylamino)uracil + riboflavin. Its pathway is cofactor biosynthesis; riboflavin biosynthesis; riboflavin from 2-hydroxy-3-oxobutyl phosphate and 5-amino-6-(D-ribitylamino)uracil: step 2/2. Functionally, catalyzes the dismutation of two molecules of 6,7-dimethyl-8-ribityllumazine, resulting in the formation of riboflavin and 5-amino-6-(D-ribitylamino)uracil. The polypeptide is Riboflavin synthase (ribE) (Buchnera aphidicola subsp. Schizaphis graminum (strain Sg)).